The following is an 82-amino-acid chain: Small ribosomal subunit protein bS16 (82 aa).

The protein belongs to the bacterial ribosomal protein bS16 family.

This Dehalococcoides mccartyi (strain ATCC BAA-2100 / JCM 16839 / KCTC 5957 / BAV1) protein is Small ribosomal subunit protein bS16.